Here is a 56-residue protein sequence, read N- to C-terminus: Small ribosomal subunit protein uS14 (56 aa).

Positions 21, 24, 39, and 42 each coordinate Zn(2+).

Belongs to the universal ribosomal protein uS14 family. Zinc-binding uS14 subfamily. In terms of assembly, part of the 30S ribosomal subunit. It depends on Zn(2+) as a cofactor.

Binds 16S rRNA, required for the assembly of 30S particles. The chain is Small ribosomal subunit protein uS14 from Methanospirillum hungatei JF-1 (strain ATCC 27890 / DSM 864 / NBRC 100397 / JF-1).